The chain runs to 331 residues: Induced myeloid leukemia cell differentiation protein Mcl-1 homolog (331 aa).

The tract at residues 85-156 (LAVPPEEMAA…PPEEEEDDLY (72 aa)) is PEST-like. Ser102 carries the phosphoserine modification. Lys117 is covalently cross-linked (Glycyl lysine isopeptide (Lys-Gly) (interchain with G-Cter in ubiquitin)). A disordered region spans residues 130–154 (EAAKSSGADGSLPSTPPPPEEEEDD). The residue at position 140 (Ser140) is a Phosphoserine; by GSK3-alpha and GSK3-beta. The residue at position 143 (Ser143) is a Phosphoserine. Position 144 is a phosphothreonine; by MAPK (Thr144). Glycyl lysine isopeptide (Lys-Gly) (interchain with G-Cter in ubiquitin) cross-links involve residues Lys175 and Lys178. Positions 190–204 (ALETLRRVGDGVQRN) match the BH3 motif. The BH1 motif lies at 234 to 253 (VFKDGVTNWGRIVTLISFGA). Positions 285–300 (DWLVKQRGWDGFVEFF) match the BH2 motif. The helical transmembrane segment at 308–330 (GIRNVLLAFAGVAGVGAGLAYLI) threads the bilayer.

This sequence belongs to the Bcl-2 family. In terms of assembly, interacts with HIF3A isoform 2 (via C-terminus domain). Interacts with BAD, BOK, BIK, BAX, BAK1, and TPT1. Interacts with BBC3, BMF and PMAIP1. Interacts with BOP. Interacts with BCL2L11; this interaction may sequester BCL2L11 and prevent its pro-apoptotic activity. Interacts with GIMAP5 and HSPA8/HSC70; the interaction between HSPA8 and MCL1 is impaired in the absence of GIMAP5. In terms of processing, cleaved by CASP3 during apoptosis, yielding a pro-apoptotic C-terminal fragment. Rapidly degraded in the absence of phosphorylation in the PEST region. Post-translationally, phosphorylated on Ser-140, by GSK3, in response to IL3/interleukin-3 withdrawal. Phosphorylation at Ser-140 induces ubiquitination and proteasomal degradation, abrogating the anti-apoptotic activity. Treatment with taxol or okadaic acid induces phosphorylation on additional sites. In terms of processing, ubiquitinated. Ubiquitination is induced by phosphorylation at Ser-140. Deubiquitinated by USP20; leading to increased stability.

Its subcellular location is the membrane. It localises to the cytoplasm. The protein resides in the mitochondrion. The protein localises to the nucleus. It is found in the nucleoplasm. Involved in the regulation of apoptosis versus cell survival, and in the maintenance of viability but not of proliferation. Mediates its effects by interactions with a number of other regulators of apoptosis. Isoform 2 has antiapoptotic activity. The protein is Induced myeloid leukemia cell differentiation protein Mcl-1 homolog (Mcl1) of Mus musculus (Mouse).